The chain runs to 239 residues: uncharacterized protein (239 aa).

This is an uncharacterized protein from Methanocaldococcus jannaschii (strain ATCC 43067 / DSM 2661 / JAL-1 / JCM 10045 / NBRC 100440) (Methanococcus jannaschii).